The sequence spans 158 residues: Succinate dehydrogenase [ubiquinone] cytochrome b small subunit B, mitochondrial (158 aa).

Residues 1 to 29 constitute a mitochondrion transit peptide; that stretch reads MAALVRISSLCHRGVSPLLFRPSSLIRPL. Residues 30 to 62 are Mitochondrial matrix-facing; the sequence is AVQQKDHDCSYLISARIHATPSNYAGSGSKAAT. A helical transmembrane segment spans residues 63 to 84; that stretch reads MHWTGERILSIALLSLAPVAYF. Topologically, residues 85 to 89 are mitochondrial intermembrane; it reads CPSPA. The helical transmembrane segment at 90-110 threads the bilayer; the sequence is VDYSLAAALTLHGHWGLGQVV. His-101 provides a ligand contact to heme b. At 111-119 the chain is on the mitochondrial matrix side; that stretch reads TDYVHGDAK. Tyr-113 contacts a ubiquinone. Residues 120 to 141 form a helical membrane-spanning segment; sequence IKMANAGLFVLSTVTFAGLCYF. Topologically, residues 142–158 are mitochondrial intermembrane; it reads NYHDVGICKAVALLWSK.

This sequence belongs to the CybS family. As to quaternary structure, component of complex II composed of four subunits: the flavoprotein (FP) SDHA, iron-sulfur protein (IP) SDHB, and a cytochrome b560 composed of SDHC and SDHD.

It localises to the mitochondrion inner membrane. It participates in carbohydrate metabolism; tricarboxylic acid cycle. In terms of biological role, membrane-anchoring subunit of succinate dehydrogenase (SDH) that is involved in complex II of the mitochondrial electron transport chain and is responsible for transferring electrons from succinate to ubiquinone (coenzyme Q). SDH also oxidizes malate to the non-canonical enol form of oxaloacetate, enol-oxaloacetate. Enol-oxaloacetate, which is a potent inhibitor of the succinate dehydrogenase activity, is further isomerized into keto-oxaloacetate. The polypeptide is Succinate dehydrogenase [ubiquinone] cytochrome b small subunit B, mitochondrial (sdhdb) (Danio rerio (Zebrafish)).